Consider the following 1257-residue polypeptide: Phosphatidylinositol 3,4,5-trisphosphate 5-phosphatase 2 (1257 aa).

An SH2 domain is found at 21-117 (WYHRDLSRAA…GLVCALLLPV (97 aa)). Positions 119–132 (GEREPDPPDDRDAS) are enriched in basic and acidic residues. Residues 119-181 (GEREPDPPDD…ESTPNGLSTV (63 aa)) form a disordered region. S132 bears the Phosphoserine mark. Residues 156-166 (PSSPLPAPETP) are compositionally biased toward pro residues. T165 is modified (phosphothreonine). Phosphoserine occurs at positions 241 and 353. At Y887 the chain carries Phosphotyrosine. S891 is modified (phosphoserine). Residues 897-986 (TGAKSKAPSV…PPKNSFNNPA (90 aa)) are disordered. Residues 939-951 (PPPTGRPPAPPRA) show a composition bias toward pro residues. Residues 945–950 (PPAPPR) carry the SH3-binding motif. A compositionally biased stretch (basic and acidic residues) spans 952–966 (VPREESLNPRLKSEG). Positions 984–987 (NPAY) match the NPXY motif motif. Y987 carries the phosphotyrosine modification. Residues 1004-1115 (SFARAPIPPT…PASTFLEEVA (112 aa)) form a disordered region. Pro residues-rich tracts occupy residues 1049–1060 (LPPPDFPPPPLP) and 1088–1104 (GPPP…PPGT). At S1132 the chain carries Phosphoserine. Phosphotyrosine is present on residues Y1136 and Y1161. Positions 1195–1257 (LGEAGMGAWL…LLLDTLQLSK (63 aa)) constitute an SAM domain. S1256 is modified (phosphoserine).

Belongs to the inositol 1,4,5-trisphosphate 5-phosphatase family. As to quaternary structure, interacts with tyrosine phosphorylated form of SHC1. Interacts with EGFR. Upon stimulation by the EGF signaling pathway, it forms a complex with SHC1 and EGFR. Interacts with cytoskeletal protein SORBS3/vinexin, promoting its localization to the periphery of cells. Forms a complex with filamin (FLNA or FLNB), actin, GPIb (GP1BA or GP1BB) that regulates cortical and submembraneous actin. Interacts with c-Met/MET, when c-Met/MET is phosphorylated on 'Tyr-1356'. Interacts with p130Cas/BCAR1. Interacts with CENTD3/ARAP3 via its SAM domain. Interacts with c-Cbl/CBL and CAP/SORBS1. Interacts with activated EPHA2 receptor. Interacts with receptors FCGR2A. Interacts with FCGR2B. Interacts with tyrosine kinase ABL1. Interacts with tyrosine kinase TEC. Interacts with CSF1R. Interacts (via N-terminus) with SH3YL1 (via SH3 domain). Interacts (via SH2 domain) with tyrosine phosphorylated KLRC1 (via ITIM). Interacts with NEDD9/HEF1. Tyrosine phosphorylated by the members of the SRC family after exposure to a diverse array of extracellular stimuli such as insulin, growth factors such as EGF or PDGF, chemokines, integrin ligands and hypertonic and oxidative stress. May be phosphorylated upon IgG receptor FCGR2B-binding. Phosphorylated at Tyr-987 following cell attachment and spreading. Phosphorylated at Tyr-1161 following EGF signaling pathway stimulation.

The protein resides in the cytoplasm. It localises to the cytosol. Its subcellular location is the cytoskeleton. It is found in the membrane. The protein localises to the cell projection. The protein resides in the filopodium. It localises to the lamellipodium. Its subcellular location is the basal cell membrane. It is found in the nucleus. The protein localises to the nucleus speckle. The protein resides in the spindle pole. It carries out the reaction a 1,2-diacyl-sn-glycero-3-phospho-(1D-myo-inositol-3,4,5-trisphosphate) + H2O = a 1,2-diacyl-sn-glycero-3-phospho-(1D-myo-inositol-3,4-bisphosphate) + phosphate. The catalysed reaction is 1,2-dioctanoyl-sn-glycero-3-phospho-(1D-myo-inositol-3,4,5-trisphosphate) + H2O = 1,2-dioctanoyl-sn-glycero-3-phospho-(1D-myo-inositol-3,4-bisphosphate) + phosphate. It catalyses the reaction 1,2-dihexadecanoyl-sn-glycero-3-phospho-(1D-myo-inositol-3,4,5-trisphosphate) + H2O = 1,2-dihexadecanoyl-sn-glycero-3-phospho-(1D-myo-inositol-3,4-bisphosphate) + phosphate. Its activity is regulated as follows. Activated upon translocation to the sites of synthesis of PtdIns(3,4,5)P3 in the membrane. Enzymatic activity is enhanced in the presence of phosphatidylserine. Its function is as follows. Phosphatidylinositol (PtdIns) phosphatase that specifically hydrolyzes the 5-phosphate of phosphatidylinositol-3,4,5-trisphosphate (PtdIns(3,4,5)P3) to produce PtdIns(3,4)P2, thereby negatively regulating the PI3K (phosphoinositide 3-kinase) pathways. Required for correct mitotic spindle orientation and therefore progression of mitosis. Plays a central role in regulation of PI3K-dependent insulin signaling, although the precise molecular mechanisms and signaling pathways remain unclear. While overexpression reduces both insulin-stimulated MAP kinase and Akt activation, its absence does not affect insulin signaling or GLUT4 trafficking. Confers resistance to dietary obesity. May act by regulating AKT2, but not AKT1, phosphorylation at the plasma membrane. Part of a signaling pathway that regulates actin cytoskeleton remodeling. Required for the maintenance and dynamic remodeling of actin structures as well as in endocytosis, having a major impact on ligand-induced EGFR internalization and degradation. Participates in regulation of cortical and submembraneous actin by hydrolyzing PtdIns(3,4,5)P3 thereby regulating membrane ruffling. Regulates cell adhesion and cell spreading. Required for HGF-mediated lamellipodium formation, cell scattering and spreading. Acts as a negative regulator of EPHA2 receptor endocytosis by inhibiting via PI3K-dependent Rac1 activation. Acts as a regulator of neuritogenesis by regulating PtdIns(3,4,5)P3 level and is required to form an initial protrusive pattern, and later, maintain proper neurite outgrowth. Acts as a negative regulator of the FC-gamma-RIIA receptor (FCGR2A). Mediates signaling from the FC-gamma-RIIB receptor (FCGR2B), playing a central role in terminating signal transduction from activating immune/hematopoietic cell receptor systems. Involved in EGF signaling pathway. Upon stimulation by EGF, it is recruited by EGFR and dephosphorylates PtdIns(3,4,5)P3. Plays a negative role in regulating the PI3K-PKB pathway, possibly by inhibiting PKB activity. Down-regulates Fc-gamma-R-mediated phagocytosis in macrophages independently of INPP5D/SHIP1. In macrophages, down-regulates NF-kappa-B-dependent gene transcription by regulating macrophage colony-stimulating factor (M-CSF)-induced signaling. Plays a role in the localization of AURKA and NEDD9/HEF1 to the basolateral membrane at interphase in polarized cysts, thereby mediates cell cycle homeostasis, cell polarization and cilia assembly. Additionally promotion of cilia growth is also facilitated by hydrolysis of (PtdIns(3,4,5)P3) to PtdIns(3,4)P2. Promotes formation of apical membrane-initiation sites during the initial stages of lumen formation via Rho family-induced actin filament organization and CTNNB1 localization to cell-cell contacts. May also hydrolyze PtdIns(1,3,4,5)P4, and could thus affect the levels of the higher inositol polyphosphates like InsP6. Involved in endochondral ossification. The chain is Phosphatidylinositol 3,4,5-trisphosphate 5-phosphatase 2 from Rattus norvegicus (Rat).